The following is a 966-amino-acid chain: DNA mismatch repair protein MutS (966 aa).

Position 709–716 (709–716 (GPNMAGKS)) interacts with ATP. The interval 894-914 (EGQRPPSSPAQPPAPPAPVVV) is disordered. Residues 899–912 (PSSPAQPPAPPAPV) show a composition bias toward pro residues.

It belongs to the DNA mismatch repair MutS family.

In terms of biological role, this protein is involved in the repair of mismatches in DNA. It is possible that it carries out the mismatch recognition step. This protein has a weak ATPase activity. This Chloroflexus aurantiacus (strain ATCC 29366 / DSM 635 / J-10-fl) protein is DNA mismatch repair protein MutS.